We begin with the raw amino-acid sequence, 355 residues long: uncharacterized protein (355 aa).

The N-terminal stretch at 1-21 is a signal peptide; the sequence is MQKKVLFNDIVFVCFPITDNG. Residues Asn20, Asn78, Asn87, Asn156, Asn159, and Asn274 are each glycosylated (N-linked (GlcNAc...) asparagine; by host). At 22-331 the chain is on the virion surface side; that stretch reads SIIISDIGYS…SSTSFFSRYG (310 aa). Positions 288 to 317 are disordered; it reads GSKSTPNGPNGPTPTPSNGPNGPTPVPGIP. A compositionally biased stretch (pro residues) spans 296–317; that stretch reads PNGPTPTPSNGPNGPTPVPGIP. N-linked (GlcNAc...) asparagine; by host glycosylation occurs at Asn320. A helical membrane pass occupies residues 332–352; it reads LWIIIAIILLIVIISAVGIYF. Residues 353–355 are Intravirion-facing; it reads YLR.

The protein localises to the host membrane. Its subcellular location is the virion. This is an uncharacterized protein from Acanthamoeba polyphaga mimivirus (APMV).